The sequence spans 244 residues: Acetoacetate decarboxylase (244 aa).

K115 (schiff-base intermediate with acetoacetate) is an active-site residue.

This sequence belongs to the ADC family. As to quaternary structure, homododecamer.

The enzyme catalyses acetoacetate + H(+) = acetone + CO2. Its function is as follows. Catalyzes the conversion of acetoacetate to acetone and carbon dioxide. This is Acetoacetate decarboxylase from Clostridium acetobutylicum (strain ATCC 824 / DSM 792 / JCM 1419 / IAM 19013 / LMG 5710 / NBRC 13948 / NRRL B-527 / VKM B-1787 / 2291 / W).